The following is a 153-amino-acid chain: MQLTELIETTVTGLGYELVDLERTGRGMVCVYIDQPAGITIDDCEKVTRQLQHVLTVENIDYERLEVSSPGLDRPLKKLADFTRFAGSEAVITLKKPLDGRKTYRGILHAPNGETIGLEFERKKGEAAMLDFTLADIDKARLIPHVDFRSRKQ.

Belongs to the RimP family.

It localises to the cytoplasm. Functionally, required for maturation of 30S ribosomal subunits. This chain is Ribosome maturation factor RimP, found in Burkholderia mallei (strain NCTC 10229).